The chain runs to 127 residues: Large ribosomal subunit protein bL17 (127 aa).

Belongs to the bacterial ribosomal protein bL17 family. In terms of assembly, part of the 50S ribosomal subunit. Contacts protein L32.

This Legionella pneumophila (strain Paris) protein is Large ribosomal subunit protein bL17.